The sequence spans 389 residues: Calreticulin (389 aa).

Positions 1–13 are cleaved as a signal peptide; the sequence is MFTLFLLIALSSA. The tract at residues 12–189 is N-domain; that stretch reads SAKVYFHETF…GVEKQEGKFD (178 aa). Residues Thr20, Asn52, and Asn53 each contribute to the Ca(2+) site. Residues Cys96 and Cys130 are joined by a disulfide bond. Residues Tyr100, Lys102, Tyr121, and Asp128 each contribute to the an alpha-D-glucoside site. 7 repeat units span residues 183 to 194, 202 to 213, 219 to 230, 237 to 248, 252 to 262, 266 to 276, and 280 to 290. The tract at residues 183 to 248 is 4 X approximate repeats; the sequence is KQEGKFDEDW…NAKKPEEWND (66 aa). Residues 190–301 form a P-domain region; the sequence is EDWDMLAPKE…YVYDPELYKY (112 aa). The segment covering 213–232 has biased composition (basic and acidic residues); sequence DEKEIDDPNDKKPEGWDDIP. The interval 213-256 is disordered; it reads DEKEIDDPNDKKPEGWDDIPKTIVDPNAKKPEEWNDEDDGEWEA. The 3 X approximate repeats stretch occupies residues 252–290; it reads GEWEAPTIENPEYKGEWKPKRIPNPAYKGEWVHPQIANP. Positions 302–389 are C-domain; the sequence is DSFAYIGIDV…IKKEENKEEL (88 aa). Asp310 contacts an alpha-D-glucoside. A Ca(2+)-binding site is contributed by Asp321. The stretch at 329–388 forms a coiled coil; the sequence is IEEAEKEAKVILERNAAEKKMRDEIKEAEKQKEEEAKKEAEKQKEEETKEEIKKEENKEE. Residues 347-389 are disordered; it reads KKMRDEIKEAEKQKEEEAKKEAEKQKEEETKEEIKKEENKEEL. A Prevents secretion from ER motif is present at residues 386 to 389; sequence KEEL.

The protein belongs to the calreticulin family. Interacts (via C-terminus) with host C1q.

The protein localises to the endoplasmic reticulum lumen. It is found in the cell projection. Its subcellular location is the uropodium. It localises to the cell surface. The protein resides in the phagocytic cup. In terms of biological role, molecular calcium-binding chaperone promoting folding, oligomeric assembly and quality control in the ER via the calreticulin/calnexin cycle. This lectin may interact transiently with almost all of the monoglucosylated glycoproteins that are synthesized in the ER. Plays a role in host cell phagocytosis, possibly by acting as a receptor for host C1q. Binding to C1q prevents the activation of the host classical complement pathway. Also, binds to apoptotic host cells independently of host C1q and collectins. The sequence is that of Calreticulin from Entamoeba histolytica (strain ATCC 30459 / HM-1:IMSS / ABRM).